We begin with the raw amino-acid sequence, 330 residues long: Glycerol-3-phosphate dehydrogenase [NAD(P)+] (330 aa).

NADPH is bound by residues serine 14, phenylalanine 15, arginine 35, and lysine 109. Residues lysine 109 and glycine 137 each contribute to the sn-glycerol 3-phosphate site. Alanine 141 provides a ligand contact to NADPH. 5 residues coordinate sn-glycerol 3-phosphate: lysine 192, aspartate 248, serine 258, arginine 259, and asparagine 260. Lysine 192 acts as the Proton acceptor in catalysis. Arginine 259 is a binding site for NADPH. NADPH-binding residues include leucine 283 and glutamate 285.

The protein belongs to the NAD-dependent glycerol-3-phosphate dehydrogenase family.

It is found in the cytoplasm. The enzyme catalyses sn-glycerol 3-phosphate + NAD(+) = dihydroxyacetone phosphate + NADH + H(+). It catalyses the reaction sn-glycerol 3-phosphate + NADP(+) = dihydroxyacetone phosphate + NADPH + H(+). Its pathway is membrane lipid metabolism; glycerophospholipid metabolism. Functionally, catalyzes the reduction of the glycolytic intermediate dihydroxyacetone phosphate (DHAP) to sn-glycerol 3-phosphate (G3P), the key precursor for phospholipid synthesis. The protein is Glycerol-3-phosphate dehydrogenase [NAD(P)+] of Rickettsia massiliae (strain Mtu5).